Reading from the N-terminus, the 280-residue chain is uncharacterized protein (280 aa).

This is an uncharacterized protein from Acanthamoeba polyphaga mimivirus (APMV).